Reading from the N-terminus, the 2313-residue chain is Protein Ycf2 (2313 aa).

1606-1613 (GSMETGRS) is an ATP binding site.

This sequence belongs to the Ycf2 family.

The protein resides in the plastid. Its subcellular location is the chloroplast stroma. In terms of biological role, probable ATPase of unknown function. Its presence in a non-photosynthetic plant (Epifagus virginiana) and experiments in tobacco indicate that it has an essential function which is probably not related to photosynthesis. The sequence is that of Protein Ycf2 from Psilotum nudum (Whisk fern).